The sequence spans 164 residues: Neurotrophin-3 (164 aa).

An N-terminal signal peptide occupies residues 1 to 3 (IQS). Positions 4-118 (TSMDQGBLSE…GLNRTSRRKR (115 aa)) are excised as a propeptide. A disordered region spans residues 89–126 (LLSENTPLEPPPLYLTEEPMGLNRTSRRKRFAEGKSHR). Asn111 carries N-linked (GlcNAc...) asparagine glycosylation.

Belongs to the NGF-beta family.

The protein resides in the secreted. In terms of biological role, seems to promote the survival of visceral and proprioceptive sensory neurons. This is Neurotrophin-3 (NTF3) from Cylindrophis ruffus (Red-tailed pipe snake).